Consider the following 107-residue polypeptide: UPF0145 protein MAB_3451c (107 aa).

The protein belongs to the UPF0145 family.

This Mycobacteroides abscessus (strain ATCC 19977 / DSM 44196 / CCUG 20993 / CIP 104536 / JCM 13569 / NCTC 13031 / TMC 1543 / L948) (Mycobacterium abscessus) protein is UPF0145 protein MAB_3451c.